The chain runs to 906 residues: Alanine--tRNA ligase, chloroplastic/mitochondrial (906 aa).

Residues 1-10 are compositionally biased toward basic and acidic residues; that stretch reads MSAATERERL. The segment at 1-22 is disordered; it reads MSAATERERLTNANPNARGKDN. Zn(2+)-binding residues include H589, H593, C691, and H695.

It belongs to the class-II aminoacyl-tRNA synthetase family. In terms of assembly, monomer. The cofactor is Zn(2+).

The protein resides in the plastid. It is found in the chloroplast. Its subcellular location is the mitochondrion. It catalyses the reaction tRNA(Ala) + L-alanine + ATP = L-alanyl-tRNA(Ala) + AMP + diphosphate. Functionally, catalyzes the attachment of alanine to tRNA(Ala) in a two-step reaction: alanine is first activated by ATP to form Ala-AMP and then transferred to the acceptor end of tRNA(Ala). Also edits incorrectly charged tRNA(Ala) via its editing domain. In Ostreococcus lucimarinus (strain CCE9901), this protein is Alanine--tRNA ligase, chloroplastic/mitochondrial.